The chain runs to 366 residues: GTP cyclohydrolase 1 type 2 homolog (366 aa).

Zn(2+) is bound by residues His64, His65, Asp102, His326, and Glu329.

The protein belongs to the GTP cyclohydrolase I type 2/NIF3 family. In terms of assembly, toroid-shaped homohexamer that has a central cavity of about 38 Angstroms diameter.

The chain is GTP cyclohydrolase 1 type 2 homolog from Staphylococcus aureus (strain Mu50 / ATCC 700699).